Reading from the N-terminus, the 397-residue chain is Arginine biosynthesis bifunctional protein ArgJ (397 aa).

Substrate is bound by residues T147, K173, T184, E270, N392, and T397. T184 functions as the Nucleophile in the catalytic mechanism.

This sequence belongs to the ArgJ family. Heterotetramer of two alpha and two beta chains.

It is found in the cytoplasm. The enzyme catalyses N(2)-acetyl-L-ornithine + L-glutamate = N-acetyl-L-glutamate + L-ornithine. It carries out the reaction L-glutamate + acetyl-CoA = N-acetyl-L-glutamate + CoA + H(+). It functions in the pathway amino-acid biosynthesis; L-arginine biosynthesis; L-ornithine and N-acetyl-L-glutamate from L-glutamate and N(2)-acetyl-L-ornithine (cyclic): step 1/1. It participates in amino-acid biosynthesis; L-arginine biosynthesis; N(2)-acetyl-L-ornithine from L-glutamate: step 1/4. Catalyzes two activities which are involved in the cyclic version of arginine biosynthesis: the synthesis of N-acetylglutamate from glutamate and acetyl-CoA as the acetyl donor, and of ornithine by transacetylation between N(2)-acetylornithine and glutamate. The chain is Arginine biosynthesis bifunctional protein ArgJ from Staphylococcus epidermidis (strain ATCC 35984 / DSM 28319 / BCRC 17069 / CCUG 31568 / BM 3577 / RP62A).